A 209-amino-acid polypeptide reads, in one-letter code: Large ribosomal subunit protein uL4 (209 aa).

Belongs to the universal ribosomal protein uL4 family. Part of the 50S ribosomal subunit.

In terms of biological role, one of the primary rRNA binding proteins, this protein initially binds near the 5'-end of the 23S rRNA. It is important during the early stages of 50S assembly. It makes multiple contacts with different domains of the 23S rRNA in the assembled 50S subunit and ribosome. Forms part of the polypeptide exit tunnel. The chain is Large ribosomal subunit protein uL4 from Borrelia duttonii (strain Ly).